Here is a 104-residue protein sequence, read N- to C-terminus: Large ribosomal subunit protein uL24 (104 aa).

Belongs to the universal ribosomal protein uL24 family. In terms of assembly, part of the 50S ribosomal subunit.

One of two assembly initiator proteins, it binds directly to the 5'-end of the 23S rRNA, where it nucleates assembly of the 50S subunit. Its function is as follows. One of the proteins that surrounds the polypeptide exit tunnel on the outside of the subunit. This chain is Large ribosomal subunit protein uL24, found in Rhodopseudomonas palustris (strain BisB5).